Consider the following 451-residue polypeptide: MESSPIPQSSGNSSTLGRVPQTPGPSTASGVPEVGLRDVASESVALFFMLLLDLTAVAGNAAVMAVIAKTPALRKFVFVFHLCLVDLLAALTLMPLAMLSSSALFDHALFGEVACRLYLFLSVCFVSLAILSVSAINVERYYYVVHPMRYEVRMTLGLVASVLVGVWVKALAMASVPVLGRVSWEEGAPSVPPGCSLQWSHSAYCQLFVVVFAVLYFLLPLLLILVVYCSMFRVARVAAMQHGPLPTWMETPRQRSESLSSRSTMVTSSGAPQTTPHRTFGGGKAAVVLLAVGGQFLLCWLPYFSFHLYVALSAQPISTGQVESVVTWIGYFCFTSNPFFYGCLNRQIRGELSKQFVCFFKPAPEEELRLPSREGSIEENFLQFLQGTGCPSESWVSRPLPSPKQEPPAVDFRIPGQIAEETSEFLEQQLTSDIIMSDSYLRPAASPRLES.

Low complexity predominate over residues 1 to 14; that stretch reads MESSPIPQSSGNSS. The interval 1–31 is disordered; the sequence is MESSPIPQSSGNSSTLGRVPQTPGPSTASGV. The Extracellular portion of the chain corresponds to 1-44; it reads MESSPIPQSSGNSSTLGRVPQTPGPSTASGVPEVGLRDVASESV. A glycan (N-linked (GlcNAc...) asparagine) is linked at N12. The chain crosses the membrane as a helical span at residues 45–67; the sequence is ALFFMLLLDLTAVAGNAAVMAVI. The Cytoplasmic portion of the chain corresponds to 68-75; sequence AKTPALRK. A helical membrane pass occupies residues 76-98; sequence FVFVFHLCLVDLLAALTLMPLAM. Residues 99-112 are Extracellular-facing; the sequence is LSSSALFDHALFGE. A helical transmembrane segment spans residues 113–135; the sequence is VACRLYLFLSVCFVSLAILSVSA. The Cytoplasmic segment spans residues 136–155; sequence INVERYYYVVHPMRYEVRMT. The chain crosses the membrane as a helical span at residues 156–178; it reads LGLVASVLVGVWVKALAMASVPV. The Extracellular portion of the chain corresponds to 179 to 206; the sequence is LGRVSWEEGAPSVPPGCSLQWSHSAYCQ. Residues 207–229 traverse the membrane as a helical segment; sequence LFVVVFAVLYFLLPLLLILVVYC. The Cytoplasmic segment spans residues 230–287; sequence SMFRVARVAAMQHGPLPTWMETPRQRSESLSSRSTMVTSSGAPQTTPHRTFGGGKAAV. A helical transmembrane segment spans residues 288–310; the sequence is VLLAVGGQFLLCWLPYFSFHLYV. The Extracellular segment spans residues 311–324; that stretch reads ALSAQPISTGQVES. A helical transmembrane segment spans residues 325–344; that stretch reads VVTWIGYFCFTSNPFFYGCL. Over 345 to 451 the chain is Cytoplasmic; the sequence is NRQIRGELSK…RPAASPRLES (107 aa).

It belongs to the G-protein coupled receptor 1 family. In terms of assembly, forms heterodimer with MTNR1B. Interacts with ARRB1 and ARRB2 in a spontaneous and agonist-independent manner; leading to the internalization of GPR61 in the endosomal compartment. In terms of tissue distribution, expressed in brain; detected in frontal and temporal lobes, occipital pole, amygdala and hippocampus. Also expressed in testis and T cells, B cells, and monocyte. Low expression in many other tissues. Widely expressed in the hippocampus (at protein level).

It is found in the cell membrane. The protein localises to the endosome membrane. In terms of biological role, orphan G-protein coupled receptor. Constitutively activates the G(s)-alpha/cAMP signaling pathway. Shows a reciprocal regulatory interaction with the melatonin receptor MTNR1B most likely through receptor heteromerization. May be involved in the regulation of food intake and body weight. The sequence is that of G-protein coupled receptor 61 (GPR61) from Homo sapiens (Human).